The sequence spans 637 residues: 1-deoxy-D-xylulose-5-phosphate synthase 1 (637 aa).

Residues His-74 and 115–117 contribute to the thiamine diphosphate site; that span reads GHS. Position 146 (Asp-146) interacts with Mg(2+). Thiamine diphosphate is bound by residues 147 to 148, Asn-175, Tyr-286, and Glu-368; that span reads GS. Asn-175 lines the Mg(2+) pocket.

Belongs to the transketolase family. DXPS subfamily. Homodimer. Mg(2+) serves as cofactor. Requires thiamine diphosphate as cofactor.

The enzyme catalyses D-glyceraldehyde 3-phosphate + pyruvate + H(+) = 1-deoxy-D-xylulose 5-phosphate + CO2. The protein operates within metabolic intermediate biosynthesis; 1-deoxy-D-xylulose 5-phosphate biosynthesis; 1-deoxy-D-xylulose 5-phosphate from D-glyceraldehyde 3-phosphate and pyruvate: step 1/1. Its function is as follows. Catalyzes the acyloin condensation reaction between C atoms 2 and 3 of pyruvate and glyceraldehyde 3-phosphate to yield 1-deoxy-D-xylulose-5-phosphate (DXP). The polypeptide is 1-deoxy-D-xylulose-5-phosphate synthase 1 (Geobacter sulfurreducens (strain ATCC 51573 / DSM 12127 / PCA)).